A 243-amino-acid polypeptide reads, in one-letter code: uncharacterized protein (243 aa).

This sequence belongs to the mycobacterial PPE family.

It localises to the cell membrane. This is an uncharacterized protein from Mycobacterium tuberculosis (strain CDC 1551 / Oshkosh).